Here is a 495-residue protein sequence, read N- to C-terminus: Probable cytochrome P450 513C1 (495 aa).

The helical transmembrane segment at 1–21 threads the bilayer; sequence MNYLVLILVSLVSIYFLFIKN. C441 provides a ligand contact to heme.

The protein belongs to the cytochrome P450 family. The cofactor is heme.

The protein localises to the membrane. The polypeptide is Probable cytochrome P450 513C1 (cyp513C1) (Dictyostelium discoideum (Social amoeba)).